We begin with the raw amino-acid sequence, 426 residues long: CAAX prenyl protease 1 homolog (426 aa).

The Lumenal portion of the chain corresponds to Met1 to Asn3. Residues Tyr4–Phe24 traverse the membrane as a helical segment. The Cytoplasmic segment spans residues Arg25–Gln70. The helical transmembrane segment at Val71–Leu91 threads the bilayer. The Lumenal portion of the chain corresponds to Glu92 to Ser106. A helical transmembrane segment spans residues Cys107–Tyr127. At Tyr128–Lys150 the chain is on the cytoplasmic side. A helical transmembrane segment spans residues Ile151–Ile171. Over Ile172–Gln178 the chain is Lumenal. The chain crosses the membrane as a helical span at residues Leu179–Pro199. At Thr200–Lys294 the chain is on the cytoplasmic side. Position 282 (His282) interacts with Zn(2+). Glu283 is a catalytic residue. Zn(2+) is bound at residue His286. A helical membrane pass occupies residues Gln295–Asn315. Residues Asp316 to Leu333 lie on the Lumenal side of the membrane. A helical membrane pass occupies residues Val334–Ile354. The Cytoplasmic segment spans residues Asn355 to Lys426. Zn(2+) is bound at residue Glu362.

Belongs to the peptidase M48B family. Requires Zn(2+) as cofactor.

The protein resides in the endoplasmic reticulum membrane. The catalysed reaction is Hydrolyzes the peptide bond -P2-(S-farnesyl or geranylgeranyl)C-P1'-P2'-P3'-COOH where P1' and P2' are amino acids with aliphatic side chains and P3' is any C-terminal residue.. Its function is as follows. Proteolytically removes the C-terminal three residues of farnesylated proteins. This is CAAX prenyl protease 1 homolog (zmpste24) from Dictyostelium discoideum (Social amoeba).